Here is a 141-residue protein sequence, read N- to C-terminus: Nucleoside diphosphate kinase (141 aa).

Positions 11, 59, 87, 93, 104, and 114 each coordinate ATP. Histidine 117 serves as the catalytic Pros-phosphohistidine intermediate.

Belongs to the NDK family. As to quaternary structure, homotetramer. Mg(2+) serves as cofactor.

It localises to the cytoplasm. It catalyses the reaction a 2'-deoxyribonucleoside 5'-diphosphate + ATP = a 2'-deoxyribonucleoside 5'-triphosphate + ADP. The catalysed reaction is a ribonucleoside 5'-diphosphate + ATP = a ribonucleoside 5'-triphosphate + ADP. Major role in the synthesis of nucleoside triphosphates other than ATP. The ATP gamma phosphate is transferred to the NDP beta phosphate via a ping-pong mechanism, using a phosphorylated active-site intermediate. The polypeptide is Nucleoside diphosphate kinase (Cellvibrio japonicus (strain Ueda107) (Pseudomonas fluorescens subsp. cellulosa)).